Here is a 125-residue protein sequence, read N- to C-terminus: Large ribosomal subunit protein bL19 (125 aa).

It belongs to the bacterial ribosomal protein bL19 family.

In terms of biological role, this protein is located at the 30S-50S ribosomal subunit interface and may play a role in the structure and function of the aminoacyl-tRNA binding site. The protein is Large ribosomal subunit protein bL19 of Ehrlichia ruminantium (strain Welgevonden).